A 218-amino-acid polypeptide reads, in one-letter code: Protein-L-isoaspartate O-methyltransferase (218 aa).

Serine 63 is an active-site residue.

Belongs to the methyltransferase superfamily. L-isoaspartyl/D-aspartyl protein methyltransferase family.

It localises to the cytoplasm. The enzyme catalyses [protein]-L-isoaspartate + S-adenosyl-L-methionine = [protein]-L-isoaspartate alpha-methyl ester + S-adenosyl-L-homocysteine. Catalyzes the methyl esterification of L-isoaspartyl residues in peptides and proteins that result from spontaneous decomposition of normal L-aspartyl and L-asparaginyl residues. It plays a role in the repair and/or degradation of damaged proteins. The protein is Protein-L-isoaspartate O-methyltransferase of Syntrophus aciditrophicus (strain SB).